The sequence spans 553 residues: Dihydrolipoyllysine-residue acetyltransferase component of pyruvate dehydrogenase complex (553 aa).

The region spanning 2–77 (AFSVQMPALG…EVGGELAVIG (76 aa)) is the Lipoyl-binding 1 domain. At lysine 43 the chain carries N6-lipoyllysine. Residues 81–125 (DAGEAAAPAPEKVPAAQPESKPAPEPPPVQPTSGAPAGGDAKPVL) are disordered. The segment covering 84–100 (EAAAPAPEKVPAAQPES) has biased composition (low complexity). Residues 101–110 (KPAPEPPPVQ) are compositionally biased toward pro residues. The Lipoyl-binding 2 domain maps to 121 to 196 (AKPVLMPELG…PVGGELARIG (76 aa)). Lysine 162 is modified (N6-lipoyllysine). Disordered regions lie at residues 204–238 (APAP…AGAA) and 278–321 (AAAE…TQKA). Residues 206 to 232 (APKPAPKPVPEPAPTPKAEPAPSPPAA) are compositionally biased toward pro residues. The Peripheral subunit-binding (PSBD) domain occupies 243–280 (YVTPLVRKLASENNIDLAGVTGTGVGGRIRKQDVLAAA). Residues 288–300 (APAPAAQAAAAPA) show a composition bias toward low complexity. Catalysis depends on residues histidine 523 and aspartate 527.

The protein belongs to the 2-oxoacid dehydrogenase family. As to quaternary structure, forms a 24-polypeptide structural core with octahedral symmetry. Part of the PDH complex, consisting of multiple copies of AceE (E1), DlaT (E2) and Lpd (E3). (R)-lipoate is required as a cofactor.

The catalysed reaction is N(6)-[(R)-dihydrolipoyl]-L-lysyl-[protein] + acetyl-CoA = N(6)-[(R)-S(8)-acetyldihydrolipoyl]-L-lysyl-[protein] + CoA. Its function is as follows. Component of the pyruvate dehydrogenase (PDH) complex, that catalyzes the overall conversion of pyruvate to acetyl-CoA and CO(2). The sequence is that of Dihydrolipoyllysine-residue acetyltransferase component of pyruvate dehydrogenase complex (dlaT) from Mycobacterium bovis (strain ATCC BAA-935 / AF2122/97).